Consider the following 310-residue polypeptide: Quinolinate synthase (310 aa).

Residues H27 and S44 each contribute to the iminosuccinate site. C89 contributes to the [4Fe-4S] cluster binding site. Iminosuccinate contacts are provided by residues Y115–N117 and S132. Residue C175 participates in [4Fe-4S] cluster binding. Residues H201–E203 and T222 contribute to the iminosuccinate site. A [4Fe-4S] cluster-binding site is contributed by C267.

The protein belongs to the quinolinate synthase family. Type 2 subfamily. The cofactor is [4Fe-4S] cluster.

It localises to the cytoplasm. The catalysed reaction is iminosuccinate + dihydroxyacetone phosphate = quinolinate + phosphate + 2 H2O + H(+). The protein operates within cofactor biosynthesis; NAD(+) biosynthesis; quinolinate from iminoaspartate: step 1/1. Functionally, catalyzes the condensation of iminoaspartate with dihydroxyacetone phosphate to form quinolinate. This Thermus thermophilus (strain ATCC BAA-163 / DSM 7039 / HB27) protein is Quinolinate synthase.